The following is a 112-amino-acid chain: MAMKYVAAYLMCVLGGNENPSTKEVKNVLGAVNADVEDEVLNNFIDSLKGKSCHELITDGLKKLQNIGGGVAAAPAGAAAVETAEAKKEDKKEEKKEEEEEEEDDLGFSLFG.

Residues 81-112 (VETAEAKKEDKKEEKKEEEEEEEDDLGFSLFG) form a disordered region. Residues 84–95 (AEAKKEDKKEEK) are compositionally biased toward basic and acidic residues. The segment covering 96-106 (KEEEEEEEDDL) has biased composition (acidic residues).

Belongs to the eukaryotic ribosomal protein P1/P2 family. In terms of assembly, P1 and P2 exist as dimers at the large ribosomal subunit. In terms of processing, phosphorylated.

Plays an important role in the elongation step of protein synthesis. This is Large ribosomal subunit protein P2 (MAL3P3.19) from Plasmodium falciparum (isolate 3D7).